The sequence spans 263 residues: Putative hydro-lyase BPUM_0381 (263 aa).

It belongs to the D-glutamate cyclase family.

The sequence is that of Putative hydro-lyase BPUM_0381 from Bacillus pumilus (strain SAFR-032).